The sequence spans 139 residues: Hydrogenase maturation factor HypA (139 aa).

His2 provides a ligand contact to Ni(2+). 4 residues coordinate Zn(2+): Cys75, Cys78, Cys111, and Cys114.

Belongs to the HypA/HybF family.

In terms of biological role, involved in the maturation of [NiFe] hydrogenases. Required for nickel insertion into the metal center of the hydrogenase. This Ignicoccus hospitalis (strain KIN4/I / DSM 18386 / JCM 14125) protein is Hydrogenase maturation factor HypA.